The sequence spans 485 residues: Trk system potassium uptake protein TrkG (485 aa).

The Cytoplasmic segment spans residues 1-5; it reads MNTSH. A helical transmembrane segment spans residues 6 to 32; it reads VRVVTHMCGFLVWLYSLSMLPPMVVAL. Residues 33–38 lie on the Periplasmic side of the membrane; the sequence is FYKEKS. Residues 39-60 form a helical membrane-spanning segment; sequence LFVFFITFVIFFCIGGGAWYTT. Residues 61-68 are Cytoplasmic-facing; the sequence is KKSGIQLR. A helical transmembrane segment spans residues 69–93; sequence TRDGFIIIVMFWILFSVISAFPLWI. Residues 101 to 112 constitute an intramembrane region (helical; Pore-forming); it reads FIDALFEGVSGI. The stretch at 113–118 is an intramembrane region; that stretch reads TTTGAT. The selectivity filter part 1 stretch occupies residues 113–118; that stretch reads TTTGAT. Residues Thr-114 and Thr-115 each contribute to the K(+) site. Over 119 to 127 the chain is Periplasmic; the sequence is VIDDVSSLP. A helical membrane pass occupies residues 128–153; the sequence is RAYLYYRSQLNFIGGLGVIVLAVAVL. Residues 154 to 180 are Cytoplasmic-facing; it reads PLLGIGGAKLYQSEMPGPFKDDKLTPR. A helical membrane pass occupies residues 181–205; the sequence is LADTSRTLWITYSLLGIACIVCYRL. The Periplasmic segment spans residues 206-208; the sequence is AGM. An intramembrane region is located at residue Pro-209. The segment at residues 210-221 is an intramembrane region (helical; Pore-forming); the sequence is LFDAICHGISTV. An intramembrane segment occupies 222–227; it reads SLGGFS. Residues 222-227 form a selectivity filter part 2 region; the sequence is SLGGFS. The K(+) site is built by Leu-223 and Gly-224. Over 228–237 the chain is Periplasmic; it reads THSESIGYFN. An intramembrane region (helical) is located at residues 238–253; sequence NYLVELVAGSFSLLSA. Residues 277 to 297 form a helical membrane-spanning segment; the sequence is LRFFLLIALGVIIVTSFQVWH. The segment at residues 303-318 is an intramembrane region (helical; Pore-forming); the sequence is LHGSFIHSFFLASSML. An intramembrane segment occupies 319-324; it reads TDNGLA. The tract at residues 319 to 324 is selectivity filter part 3; it reads TDNGLA. Asp-320 and Asn-321 together coordinate K(+). Topologically, residues 325–332 are periplasmic; that stretch reads TQDYASWP. Residues 333 to 344 constitute an intramembrane region (helical); the sequence is THTIVFLLLSSF. The note=Loop between two helices intramembrane region spans 345-357; it reads FGGCIGSTCGGIK. Residues 392 to 419 form a helical membrane-spanning segment; sequence TDRVMRSVWSFFFLYTLFTVFFILVLNG. At 420–421 the chain is on the periplasmic side; the sequence is MG. The stretch at 422–423 is an intramembrane region; that stretch reads YD. The segment at residues 424–434 is an intramembrane region (helical; Pore-forming); that stretch reads FLTSFATVAAC. Residues 435–441 lie within the membrane without spanning it; it reads INNMGLG. The tract at residues 436–441 is selectivity filter part 4; sequence NNMGLG. K(+) is bound by residues Asn-437 and Met-438. Residues 442–453 are Periplasmic-facing; that stretch reads FGATASSFGVLN. An intramembrane region (helical) is located at residues 454–465; that stretch reads DIAKCLMCIAMI.

Belongs to the TrkH potassium transport family.

The protein resides in the cell inner membrane. Functionally, low-affinity potassium transport system. Interacts with Trk system potassium uptake protein TrkA. Requires TrkE (sapD) for maximal transport activity, low activity is seen in its absence; no further stimulation is seen with SapF. Transport in the absence of SapD is dependent on a high membrane potential and a high cytoplasmic ATP concentration, suggesting this protein may be able to interact with other ATP-binding proteins. Can transport potassium and rubidium. The chain is Trk system potassium uptake protein TrkG (trkG) from Escherichia coli (strain K12).